The sequence spans 561 residues: Centromere protein T (561 aa).

Positions 1–83 are disordered; it reads MADHNPDSDS…HIQASGHLEE (83 aa). The segment covering 18–27 has biased composition (basic and acidic residues); sequence RVLDTADPRT. A compositionally biased stretch (low complexity) spans 34–46; the sequence is ARAGARRALLETA. The residue at position 47 (serine 47) is a Phosphoserine. The residue at position 85 (threonine 85) is a Phosphothreonine. Residues 93 to 421 are flexible stalk domain; it reads ILLTAPESSI…RHHQFLEPAP (329 aa). Disordered stretches follow at residues 256-292 and 333-457; these read HSLP…PGKP and AEKK…DPHK. Residues 276–288 show a composition bias toward polar residues; the sequence is KTQSSGPGLQKNS. Serine 343, serine 345, and serine 356 each carry phosphoserine. The segment covering 357–367 has biased composition (basic and acidic residues); the sequence is RVEEAEGHTEV. Serine 373, serine 385, serine 386, and serine 397 each carry phosphoserine. Positions 395–407 are enriched in low complexity; sequence AASPESASSTPES.

It belongs to the CENP-T/CNN1 family. In terms of assembly, component of the CENPA-CAD complex, composed of CENPI, CENPK, CENPL, CENPO, CENPP, CENPQ, CENPR and CENPS. The CENPA-CAD complex is probably recruited on centromeres by the CENPA-NAC complex, at least composed of CENPA, CENPC, CENPH, CENPM, CENPN, CENPT and CENPU. Identified in a centromeric complex containing histones H2A, H2B, H3 and H4, and at least CENPA, CENPB, CENPC, CENPT, CENPN, HJURP, SUPT16H, SSRP1 and RSF1. Interacts (via N-terminus) with the NDC80 complex. Heterodimer with CENPW; this dimer coassembles with CENPS-CENPX heterodimers at centromeres to form the tetrameric CENP-T-W-S-X complex. Post-translationally, dynamically phosphorylated at Ser-47 and probably also other sites during the cell cycle. Phosphorylated at Ser-47 during G2 phase, metaphase and anaphase, but not during telophase or G1 phase.

It is found in the nucleus. It localises to the chromosome. The protein resides in the centromere. The protein localises to the kinetochore. Its function is as follows. Component of the CENPA-NAC (nucleosome-associated) complex, a complex that plays a central role in assembly of kinetochore proteins, mitotic progression and chromosome segregation. The CENPA-NAC complex recruits the CENPA-CAD (nucleosome distal) complex and may be involved in incorporation of newly synthesized CENPA into centromeres. Part of a nucleosome-associated complex that binds specifically to histone H3-containing nucleosomes at the centromere, as opposed to nucleosomes containing CENPA. Component of the heterotetrameric CENP-T-W-S-X complex that binds and supercoils DNA, and plays an important role in kinetochore assembly. CENPT has a fundamental role in kinetochore assembly and function. It is one of the inner kinetochore proteins, with most further proteins binding downstream. Required for normal chromosome organization and normal progress through mitosis. This Homo sapiens (Human) protein is Centromere protein T (CENPT).